The chain runs to 339 residues: Biotin synthase (339 aa).

The Radical SAM core domain maps to 55-282 (NAVQLSTLLS…KAVVRLSAGR (228 aa)). 3 residues coordinate [4Fe-4S] cluster: C70, C74, and C77. Residues C114, C145, C205, and R277 each coordinate [2Fe-2S] cluster.

The protein belongs to the radical SAM superfamily. Biotin synthase family. Homodimer. [4Fe-4S] cluster is required as a cofactor. [2Fe-2S] cluster serves as cofactor.

It carries out the reaction (4R,5S)-dethiobiotin + (sulfur carrier)-SH + 2 reduced [2Fe-2S]-[ferredoxin] + 2 S-adenosyl-L-methionine = (sulfur carrier)-H + biotin + 2 5'-deoxyadenosine + 2 L-methionine + 2 oxidized [2Fe-2S]-[ferredoxin]. It functions in the pathway cofactor biosynthesis; biotin biosynthesis; biotin from 7,8-diaminononanoate: step 2/2. Its function is as follows. Catalyzes the conversion of dethiobiotin (DTB) to biotin by the insertion of a sulfur atom into dethiobiotin via a radical-based mechanism. The polypeptide is Biotin synthase (Burkholderia cenocepacia (strain ATCC BAA-245 / DSM 16553 / LMG 16656 / NCTC 13227 / J2315 / CF5610) (Burkholderia cepacia (strain J2315))).